A 279-amino-acid chain; its full sequence is NADPH-dependent 7-cyano-7-deazaguanine reductase (279 aa).

Substrate is bound at residue 86-88 (IES). 88-89 (SK) provides a ligand contact to NADPH. C187 acts as the Thioimide intermediate in catalysis. The active-site Proton donor is the D194. A substrate-binding site is contributed by 226–227 (HE). NADPH is bound at residue 255 to 256 (RG).

The protein belongs to the GTP cyclohydrolase I family. QueF type 2 subfamily. In terms of assembly, homodimer.

It localises to the cytoplasm. It catalyses the reaction 7-aminomethyl-7-carbaguanine + 2 NADP(+) = 7-cyano-7-deazaguanine + 2 NADPH + 3 H(+). The protein operates within tRNA modification; tRNA-queuosine biosynthesis. In terms of biological role, catalyzes the NADPH-dependent reduction of 7-cyano-7-deazaguanine (preQ0) to 7-aminomethyl-7-deazaguanine (preQ1). The polypeptide is NADPH-dependent 7-cyano-7-deazaguanine reductase (Actinobacillus pleuropneumoniae serotype 5b (strain L20)).